The primary structure comprises 343 residues: Putative ALA-interacting subunit 2 (343 aa).

Residues 43-63 traverse the membrane as a helical segment; sequence PISVITVFMLMGFVFIPIGLI. 4 N-linked (GlcNAc...) asparagine glycosylation sites follow: Asn103, Asn178, Asn191, and Asn218. Residues 301–321 form a helical membrane-spanning segment; the sequence is FLGITYLVVGSSSIVISIIFM.

The protein belongs to the CDC50/LEM3 family. In terms of tissue distribution, expressed in roots, leaves, stems, flowers and siliques.

It is found in the membrane. This is Putative ALA-interacting subunit 2 (ALIS2) from Arabidopsis thaliana (Mouse-ear cress).